The primary structure comprises 104 residues: MKECVVWTVNLDSKKSRAEGRRIPRRFAVPNVKLHELVEACKELGLKFRAEEKKYPKSWWEEGGRVVVEKRGTKTKLMIELARKIAEIREQKREQKKDKKKKKK.

It belongs to the SRP19 family. Part of the signal recognition particle protein translocation system, which is composed of SRP and FtsY. Archaeal SRP consists of a 7S RNA molecule of 300 nucleotides and two protein subunits: SRP54 and SRP19.

It is found in the cytoplasm. In terms of biological role, involved in targeting and insertion of nascent membrane proteins into the cytoplasmic membrane. Binds directly to 7S RNA and mediates binding of the 54 kDa subunit of the SRP. In Archaeoglobus fulgidus (strain ATCC 49558 / DSM 4304 / JCM 9628 / NBRC 100126 / VC-16), this protein is Signal recognition particle 19 kDa protein.